Consider the following 505-residue polypeptide: Lysine--tRNA ligase (505 aa).

2 residues coordinate Mg(2+): glutamate 409 and glutamate 416.

This sequence belongs to the class-II aminoacyl-tRNA synthetase family. Homodimer. The cofactor is Mg(2+).

The protein resides in the cytoplasm. It catalyses the reaction tRNA(Lys) + L-lysine + ATP = L-lysyl-tRNA(Lys) + AMP + diphosphate. This is Lysine--tRNA ligase from Latilactobacillus sakei subsp. sakei (strain 23K) (Lactobacillus sakei subsp. sakei).